The primary structure comprises 108 residues: UPF0145 protein sll118 (108 aa).

The protein belongs to the UPF0145 family.

This Synechocystis sp. (strain ATCC 27184 / PCC 6803 / Kazusa) protein is UPF0145 protein sll118.